The primary structure comprises 632 residues: Arginine--tRNA ligase (632 aa).

The 'HIGH' region motif lies at 120 to 130; sequence ANPIHPLHIGH.

This sequence belongs to the class-I aminoacyl-tRNA synthetase family.

It localises to the cytoplasm. It carries out the reaction tRNA(Arg) + L-arginine + ATP = L-arginyl-tRNA(Arg) + AMP + diphosphate. This Pyrobaculum islandicum (strain DSM 4184 / JCM 9189 / GEO3) protein is Arginine--tRNA ligase.